A 457-amino-acid polypeptide reads, in one-letter code: MTKKVYVKTFGCQMNEYDSDKMVDVLGAAEGLVKTDTPEDADVILFNTCSVREKAQEKVFSDLGRVRELKEANPNLIIGVGGCVASQEGAAIVSRAPYVDLVFGPQTLHRLPQMIDKRRESGRAQVDISFPEIEKFDHLPPARVDGPSAFVSIMEGCSKYCSYCVVPYTRGEEVSRPLDDVLTEIAGLADQGVREVTLLGQNVNAYRAGLTLGSTEIADFAQLIEYVADIPGIERIRYTTSHPKEFTQRLIDTYAKVPKLVSHLHLPVQHGSDRILMAMKRGYTVLEYKSVIRKLRAIRPDLSLSTDMIVGFPGETEEDFDKMMALVHEMKYDTSFSFIYSPRPGTPAANLHDDTPREVKLKRLQHLQATIEENVQRISDSMVGKIERILVERPARKDPNELAGRTENNRVVNFPAPIASHARLIGQMVDVKIVKAYPHSLRGELVLVHDDAPATTH.

The 118-residue stretch at 3–120 (KKVYVKTFGC…LPQMIDKRRE (118 aa)) folds into the MTTase N-terminal domain. [4Fe-4S] cluster contacts are provided by Cys-12, Cys-49, Cys-83, Cys-157, Cys-161, and Cys-164. A Radical SAM core domain is found at 143–377 (RVDGPSAFVS…QATIEENVQR (235 aa)). Positions 380–447 (DSMVGKIERI…PHSLRGELVL (68 aa)) constitute a TRAM domain.

It belongs to the methylthiotransferase family. MiaB subfamily. In terms of assembly, monomer. The cofactor is [4Fe-4S] cluster.

The protein resides in the cytoplasm. The enzyme catalyses N(6)-dimethylallyladenosine(37) in tRNA + (sulfur carrier)-SH + AH2 + 2 S-adenosyl-L-methionine = 2-methylsulfanyl-N(6)-dimethylallyladenosine(37) in tRNA + (sulfur carrier)-H + 5'-deoxyadenosine + L-methionine + A + S-adenosyl-L-homocysteine + 2 H(+). Functionally, catalyzes the methylthiolation of N6-(dimethylallyl)adenosine (i(6)A), leading to the formation of 2-methylthio-N6-(dimethylallyl)adenosine (ms(2)i(6)A) at position 37 in tRNAs that read codons beginning with uridine. This is tRNA-2-methylthio-N(6)-dimethylallyladenosine synthase from Paraburkholderia phytofirmans (strain DSM 17436 / LMG 22146 / PsJN) (Burkholderia phytofirmans).